The primary structure comprises 954 residues: Glycine dehydrogenase (decarboxylating) (954 aa).

Polar residues predominate over residues 1 to 13; sequence MTELLQSLSTQNE. The interval 1 to 24 is disordered; sequence MTELLQSLSTQNEFVARHNGPNKS. The residue at position 704 (Lys704) is an N6-(pyridoxal phosphate)lysine.

This sequence belongs to the GcvP family. In terms of assembly, the glycine cleavage system is composed of four proteins: P, T, L and H. The cofactor is pyridoxal 5'-phosphate.

It catalyses the reaction N(6)-[(R)-lipoyl]-L-lysyl-[glycine-cleavage complex H protein] + glycine + H(+) = N(6)-[(R)-S(8)-aminomethyldihydrolipoyl]-L-lysyl-[glycine-cleavage complex H protein] + CO2. The glycine cleavage system catalyzes the degradation of glycine. The P protein binds the alpha-amino group of glycine through its pyridoxal phosphate cofactor; CO(2) is released and the remaining methylamine moiety is then transferred to the lipoamide cofactor of the H protein. This Vibrio campbellii (strain ATCC BAA-1116) protein is Glycine dehydrogenase (decarboxylating).